We begin with the raw amino-acid sequence, 107 residues long: MSQRLTDVLQRLAATIEARKGGDPSVSYTAKLLNDPALAAKKLGEEAVETVIAAVAQGSDALAAESADLLYHWLALMAASGVSLDAVAEKLEAREGTSGIAEKASRA.

This sequence belongs to the PRA-PH family.

Its subcellular location is the cytoplasm. The enzyme catalyses 1-(5-phospho-beta-D-ribosyl)-ATP + H2O = 1-(5-phospho-beta-D-ribosyl)-5'-AMP + diphosphate + H(+). Its pathway is amino-acid biosynthesis; L-histidine biosynthesis; L-histidine from 5-phospho-alpha-D-ribose 1-diphosphate: step 2/9. The polypeptide is Phosphoribosyl-ATP pyrophosphatase (hisE) (Caulobacter vibrioides (strain ATCC 19089 / CIP 103742 / CB 15) (Caulobacter crescentus)).